Consider the following 352-residue polypeptide: Anthranilate phosphoribosyltransferase (352 aa).

5-phospho-alpha-D-ribose 1-diphosphate-binding positions include Gly-83, 86–87 (GD), Thr-91, 93–96 (NIST), 111–119 (KHGGRSVSS), and Ala-123. Gly-83 contributes to the anthranilate binding site. Ser-95 provides a ligand contact to Mg(2+). Arg-169 serves as a coordination point for anthranilate. Asp-228 and Glu-229 together coordinate Mg(2+).

It belongs to the anthranilate phosphoribosyltransferase family. Homodimer. Requires Mg(2+) as cofactor.

It catalyses the reaction N-(5-phospho-beta-D-ribosyl)anthranilate + diphosphate = 5-phospho-alpha-D-ribose 1-diphosphate + anthranilate. It participates in amino-acid biosynthesis; L-tryptophan biosynthesis; L-tryptophan from chorismate: step 2/5. Functionally, catalyzes the transfer of the phosphoribosyl group of 5-phosphorylribose-1-pyrophosphate (PRPP) to anthranilate to yield N-(5'-phosphoribosyl)-anthranilate (PRA). The chain is Anthranilate phosphoribosyltransferase from Neisseria meningitidis serogroup A / serotype 4A (strain DSM 15465 / Z2491).